The following is a 565-amino-acid chain: Zinc finger protein 143 (565 aa).

7 consecutive C2H2-type zinc fingers follow at residues Phe230–His254, Tyr260–His284, Tyr290–His314, Phe320–His344, Tyr350–His374, Tyr380–His404, and Tyr410–His433.

It belongs to the GLI C2H2-type zinc-finger protein family.

Its subcellular location is the nucleus. Functionally, transcriptional activator. Activates the gene for selenocysteine tRNA (tRNAsec). Binds to the activator element (AE) motif of the selenocysteine tRNA gene promoter. This Xenopus laevis (African clawed frog) protein is Zinc finger protein 143 (znf143).